The primary structure comprises 75 residues: Protein SlyX homolog (75 aa).

It belongs to the SlyX family.

The protein is Protein SlyX homolog of Vibrio campbellii (strain ATCC BAA-1116).